The chain runs to 351 residues: Holliday junction branch migration complex subunit RuvB (351 aa).

Positions 1–22 (MSDPKANRMVSPERRSDDVGDT) are disordered. Residues 2–185 (SDPKANRMVS…FGIPVRLNFY (184 aa)) form a large ATPase domain (RuvB-L) region. Residues leucine 24, arginine 25, glycine 66, lysine 69, threonine 70, threonine 71, 132–134 (EDF), arginine 175, tyrosine 185, and arginine 222 each bind ATP. Threonine 70 is a binding site for Mg(2+). The interval 186 to 256 (TIEELESIVS…IADHALSALE (71 aa)) is small ATPAse domain (RuvB-S). Residues 259 to 351 (AAGLDAMDRR…GLFGTDESDD (93 aa)) form a head domain (RuvB-H) region. Positions 295, 314, and 319 each coordinate DNA.

It belongs to the RuvB family. In terms of assembly, homohexamer. Forms an RuvA(8)-RuvB(12)-Holliday junction (HJ) complex. HJ DNA is sandwiched between 2 RuvA tetramers; dsDNA enters through RuvA and exits via RuvB. An RuvB hexamer assembles on each DNA strand where it exits the tetramer. Each RuvB hexamer is contacted by two RuvA subunits (via domain III) on 2 adjacent RuvB subunits; this complex drives branch migration. In the full resolvosome a probable DNA-RuvA(4)-RuvB(12)-RuvC(2) complex forms which resolves the HJ.

The protein resides in the cytoplasm. The catalysed reaction is ATP + H2O = ADP + phosphate + H(+). Its function is as follows. The RuvA-RuvB-RuvC complex processes Holliday junction (HJ) DNA during genetic recombination and DNA repair, while the RuvA-RuvB complex plays an important role in the rescue of blocked DNA replication forks via replication fork reversal (RFR). RuvA specifically binds to HJ cruciform DNA, conferring on it an open structure. The RuvB hexamer acts as an ATP-dependent pump, pulling dsDNA into and through the RuvAB complex. RuvB forms 2 homohexamers on either side of HJ DNA bound by 1 or 2 RuvA tetramers; 4 subunits per hexamer contact DNA at a time. Coordinated motions by a converter formed by DNA-disengaged RuvB subunits stimulates ATP hydrolysis and nucleotide exchange. Immobilization of the converter enables RuvB to convert the ATP-contained energy into a lever motion, pulling 2 nucleotides of DNA out of the RuvA tetramer per ATP hydrolyzed, thus driving DNA branch migration. The RuvB motors rotate together with the DNA substrate, which together with the progressing nucleotide cycle form the mechanistic basis for DNA recombination by continuous HJ branch migration. Branch migration allows RuvC to scan DNA until it finds its consensus sequence, where it cleaves and resolves cruciform DNA. This Bradyrhizobium diazoefficiens (strain JCM 10833 / BCRC 13528 / IAM 13628 / NBRC 14792 / USDA 110) protein is Holliday junction branch migration complex subunit RuvB.